The following is an 88-amino-acid chain: Small ribosomal subunit protein bS18B (88 aa).

It belongs to the bacterial ribosomal protein bS18 family. As to quaternary structure, part of the 30S ribosomal subunit. Forms a tight heterodimer with protein bS6.

Its function is as follows. Binds as a heterodimer with protein bS6 to the central domain of the 16S rRNA, where it helps stabilize the platform of the 30S subunit. The chain is Small ribosomal subunit protein bS18B (rpsR2) from Mycobacterium bovis (strain ATCC BAA-935 / AF2122/97).